The chain runs to 101 residues: Vacuolar ATPase assembly integral membrane protein VMA21 (101 aa).

Residues 1–25 (MERPDKAALNALQPPEFRNESSLAS) lie on the Cytoplasmic side of the membrane. The chain crosses the membrane as a helical span at residues 26–46 (TLKTLLFFTALMITVPIGLYF). Residues 47–65 (TTKSYIFEGALGMSNRDSY) are Lumenal-facing. Residues 66 to 86 (FYAAIVAVVAVHVVLALFVYV) traverse the membrane as a helical segment. Residues 87–101 (AWNEGSRQWREGKQD) lie on the Cytoplasmic side of the membrane.

It belongs to the VMA21 family. Associates with the V0 complex of the vacuolar ATPase (V-ATPase). Interacts with ATP6AP2.

It localises to the endoplasmic reticulum membrane. Its subcellular location is the endoplasmic reticulum-Golgi intermediate compartment membrane. It is found in the cytoplasmic vesicle. The protein localises to the COPII-coated vesicle membrane. Required for the assembly of the V0 complex of the vacuolar ATPase (V-ATPase) in the endoplasmic reticulum. The chain is Vacuolar ATPase assembly integral membrane protein VMA21 from Homo sapiens (Human).